The sequence spans 756 residues: Cilium assembly protein DZIP1L (756 aa).

A disordered region spans residues 1–20; sequence MLGQFSPGEPYTTSLSSTPP. The span at 10 to 19 shows a compositional bias: low complexity; it reads PYTTSLSSTP. The stretch at 108–158 forms a coiled coil; that stretch reads DFLSSQLAGLEERLQAATSLVQQGEGQRAELEKSLQETKQENRRRKQLIAT. Residues 171-194 form a C2H2-type zinc finger; that stretch reads HKCQFCEKSFVNYSYLQAHVQRRH. 4 stretches are compositionally biased toward basic and acidic residues: residues 193-202, 237-262, 319-335, and 344-365; these read RHPEVTDAEK, NLRR…ERWK, DPEK…LRER, and RRKF…KSEN. Disordered stretches follow at residues 193-212, 233-262, 310-365, 409-466, 531-626, and 693-756; these read RHPE…EEME, QQAD…ERWK, NNAS…KSEN, KIKK…MRES, VKSL…AYIT, and IKTP…GTSA. Coiled coils occupy residues 196 to 283 and 321 to 416; these read EVTD…FLQE and EKEM…LSAT. The segment covering 534 to 558 has biased composition (polar residues); the sequence is LQKSSGKPTPNTLKQRGKKTSTPLN. The span at 560–578 shows a compositional bias: basic and acidic residues; the sequence is KSLRFRQDSKASDRREKSQ. Pro residues predominate over residues 586 to 598; the sequence is TPTPRSKAPPPNQ.

The protein belongs to the DZIP C2H2-type zinc-finger protein family.

It localises to the cytoplasm. It is found in the cytoskeleton. The protein resides in the cilium basal body. The protein localises to the microtubule organizing center. Its subcellular location is the centrosome. It localises to the centriole. Functionally, involved in primary cilium formation. Probably acts as a transition zone protein required for localization of PKD1/PC1 and PKD2/PC2 to the ciliary membrane. This is Cilium assembly protein DZIP1L (dzip1l) from Danio rerio (Zebrafish).